Consider the following 423-residue polypeptide: TPR repeat-containing protein YpiA (423 aa).

9 TPR repeats span residues 33–66, 67–100, 135–168, 171–204, 238–271, 272–305, 306–339, 340–373, and 374–407; these read DEDK…YPNE, TELT…DPSY, PVID…QSEI, VNVH…NPDP, TSLY…DEYN, KELF…DPGF, VEAL…GEED, PKYN…YRED, and RDFL…DGAN.

In terms of assembly, interacts with the RNA polymerase core.

This chain is TPR repeat-containing protein YpiA (ypiA), found in Bacillus subtilis (strain 168).